Here is an 868-residue protein sequence, read N- to C-terminus: Metabotropic glutamate receptor 6 (868 aa).

An N-terminal signal peptide occupies residues 1–20 (MARLLLALLAWLAQMSPVRA). Residues 21 to 576 (AGSVRLAGGL…VVRLTWSSPW (556 aa)) lie on the Extracellular side of the membrane. Cysteines 48 and 90 form a disulfide. L-glutamate is bound by residues serine 145, 166-168 (AST), and tyrosine 216. Cystine bridges form between cysteine 235-cysteine 527, cysteine 358-cysteine 374, cysteine 414-cysteine 421, cysteine 509-cysteine 528, cysteine 513-cysteine 531, cysteine 534-cysteine 546, and cysteine 549-cysteine 562. The N-linked (GlcNAc...) asparagine glycan is linked to asparagine 287. Aspartate 298 contacts L-glutamate. Lysine 391 contacts L-glutamate. Residues asparagine 442 and asparagine 470 are each glycosylated (N-linked (GlcNAc...) asparagine). A glycan (N-linked (GlcNAc...) asparagine) is linked at asparagine 558. Residues 577–599 (AAPPLLLAVLGIMATTTVVGTFV) form a helical membrane-spanning segment. At 600–613 (RHNNTPIVRASGRE) the chain is on the cytoplasmic side. The chain crosses the membrane as a helical span at residues 614–634 (LSYVLLTGIFLIYAVTFLMVA). At 635 to 645 (EPGAAVCATRR) the chain is on the extracellular side. A helical transmembrane segment spans residues 646 to 664 (LFLGLGTTLSYSALLTKTN). At 665–688 (RIYRIFEQGKRSVTPPPFISPTSQ) the chain is on the cytoplasmic side. A helical membrane pass occupies residues 689 to 709 (LVITFSLTSLQVVGVIAWLGA). At 710-739 (QPPHSVIDYEEQRTVDPEQARGVLKCDMSD) the chain is on the extracellular side. Residues 740 to 761 (LSLIGCLGYSLLLMVTCTVYAI) form a helical membrane-spanning segment. At 762 to 774 (KARGVPETFNEAK) the chain is on the cytoplasmic side. Residues 775-797 (PIGFTMYTTCIVWLAFVPIFFGT) form a helical membrane-spanning segment. The Extracellular segment spans residues 798 to 810 (AQSAEKIYIQTTT). A helical transmembrane segment spans residues 811-836 (LTVSLSLSASVSLGMLYVPKTYVILF). Over 837-868 (HPEQNVQKRKRSLKTTSTVAAPPKGADTEDPK) the chain is Cytoplasmic. Residues 845 to 868 (RKRSLKTTSTVAAPPKGADTEDPK) are disordered.

The protein belongs to the G-protein coupled receptor 3 family. Homodimer. Interacts with GPR179. Interacts with photoreceptor synaptic protein LRIT1 (via its N-terminal extracellular domain).

The protein localises to the cell membrane. It is found in the endoplasmic reticulum membrane. Its subcellular location is the golgi apparatus membrane. The protein resides in the cell projection. It localises to the dendrite. Its function is as follows. G-protein coupled receptor for glutamate. Ligand binding causes a conformation change that triggers signaling via guanine nucleotide-binding proteins (G proteins) and modulates the activity of down-stream effectors, such as adenylate cyclase. Signaling inhibits adenylate cyclase activity. Signaling stimulates TRPM1 channel activity and Ca(2+) uptake. Required for normal vision. The polypeptide is Metabotropic glutamate receptor 6 (GRM6) (Oryctolagus cuniculus (Rabbit)).